The sequence spans 310 residues: Carbamate kinase 1 (310 aa).

The protein belongs to the carbamate kinase family.

The protein resides in the cytoplasm. It catalyses the reaction hydrogencarbonate + NH4(+) + ATP = carbamoyl phosphate + ADP + H2O + H(+). It participates in metabolic intermediate metabolism; carbamoyl phosphate degradation; CO(2) and NH(3) from carbamoyl phosphate: step 1/1. This Staphylococcus aureus (strain COL) protein is Carbamate kinase 1 (arcC1).